Consider the following 249-residue polypeptide: Adenosylcobinamide-GDP ribazoletransferase (249 aa).

6 consecutive transmembrane segments (helical) span residues 32–52, 53–73, 107–127, 136–156, 190–210, and 224–244; these read MVAF…TWFG, ATWL…WGAI, IGTM…LFVL, ALIV…FWFP, LLWW…IIIA, and TYGA…AALV.

Belongs to the CobS family. Requires Mg(2+) as cofactor.

It localises to the cell membrane. The enzyme catalyses alpha-ribazole + adenosylcob(III)inamide-GDP = adenosylcob(III)alamin + GMP + H(+). It catalyses the reaction alpha-ribazole 5'-phosphate + adenosylcob(III)inamide-GDP = adenosylcob(III)alamin 5'-phosphate + GMP + H(+). It functions in the pathway cofactor biosynthesis; adenosylcobalamin biosynthesis; adenosylcobalamin from cob(II)yrinate a,c-diamide: step 7/7. In terms of biological role, joins adenosylcobinamide-GDP and alpha-ribazole to generate adenosylcobalamin (Ado-cobalamin). Also synthesizes adenosylcobalamin 5'-phosphate from adenosylcobinamide-GDP and alpha-ribazole 5'-phosphate. The chain is Adenosylcobinamide-GDP ribazoletransferase from Herpetosiphon aurantiacus (strain ATCC 23779 / DSM 785 / 114-95).